We begin with the raw amino-acid sequence, 648 residues long: Macrolide export ATP-binding/permease protein MacB (648 aa).

The region spanning 5–243 is the ABC transporter domain; that stretch reads LELCNVSRSY…QGVDAAVVNT (239 aa). Position 41 to 48 (41 to 48) interacts with ATP; that stretch reads GVSGSGKS. 5 consecutive transmembrane segments (helical) span residues 273 to 293, 417 to 437, 523 to 543, 577 to 597, and 611 to 631; these read LLTM…VVVG, ANVV…IGVA, LFLT…VMNI, VLVC…IAFM, and LTAL…FGWL.

This sequence belongs to the ABC transporter superfamily. Macrolide exporter (TC 3.A.1.122) family. Homodimer. Part of the tripartite efflux system MacAB-TolC, which is composed of an inner membrane transporter, MacB, a periplasmic membrane fusion protein, MacA, and an outer membrane component, TolC. The complex forms a large protein conduit and can translocate molecules across both the inner and outer membranes. Interacts with MacA.

The protein localises to the cell inner membrane. Part of the tripartite efflux system MacAB-TolC. MacB is a non-canonical ABC transporter that contains transmembrane domains (TMD), which form a pore in the inner membrane, and an ATP-binding domain (NBD), which is responsible for energy generation. Confers resistance against macrolides. In Salmonella typhi, this protein is Macrolide export ATP-binding/permease protein MacB.